We begin with the raw amino-acid sequence, 234 residues long: Proteasome subunit alpha type-2 (234 aa).

At alanine 2 the chain carries N-acetylalanine. Phosphotyrosine is present on tyrosine 121.

The protein belongs to the peptidase T1A family. The 26S proteasome consists of a 20S proteasome core and two 19S regulatory subunits. The 20S proteasome core is a barrel-shaped complex made of 28 subunits that are arranged in four stacked rings. The two outer rings are each formed by seven alpha subunits, and the two inner rings are formed by seven beta subunits. The proteolytic activity is exerted by three beta-subunits PSMB5, PSMB6 and PSMB7.

The protein resides in the cytoplasm. The protein localises to the nucleus. Functionally, component of the 20S core proteasome complex involved in the proteolytic degradation of most intracellular proteins. This complex plays numerous essential roles within the cell by associating with different regulatory particles. Associated with two 19S regulatory particles, forms the 26S proteasome and thus participates in the ATP-dependent degradation of ubiquitinated proteins. The 26S proteasome plays a key role in the maintenance of protein homeostasis by removing misfolded or damaged proteins that could impair cellular functions, and by removing proteins whose functions are no longer required. Associated with the PA200 or PA28, the 20S proteasome mediates ubiquitin-independent protein degradation. This type of proteolysis is required in several pathways including spermatogenesis (20S-PA200 complex) or generation of a subset of MHC class I-presented antigenic peptides (20S-PA28 complex). In Xenopus laevis (African clawed frog), this protein is Proteasome subunit alpha type-2 (psma2).